We begin with the raw amino-acid sequence, 181 residues long: Probable Brix domain-containing ribosomal biogenesis protein (181 aa).

The Brix domain maps to 5 to 181; that stretch reads CKVIITTSRE…RIKKVVYRHV (177 aa).

Probably involved in the biogenesis of the ribosome. The protein is Probable Brix domain-containing ribosomal biogenesis protein of Pyrobaculum aerophilum (strain ATCC 51768 / DSM 7523 / JCM 9630 / CIP 104966 / NBRC 100827 / IM2).